Reading from the N-terminus, the 30-residue chain is Beta-endorphin-2 (30 aa).

An N-acetyltyrosine modification is found at Tyr1.

Belongs to the POMC family.

It localises to the secreted. The chain is Beta-endorphin-2 from Oncorhynchus keta (Chum salmon).